We begin with the raw amino-acid sequence, 134 residues long: uncharacterized protein (134 aa).

A signal peptide spans 1–26 (MRLYKAMALCLPLVVICTSEVSQSTA). Positions 77–98 (GEKNEEVAGPVDGEGSEEEAFD) are disordered.

This is an uncharacterized protein from Encephalitozoon cuniculi (strain GB-M1) (Microsporidian parasite).